A 1242-amino-acid polypeptide reads, in one-letter code: Protein jagged-1a (1242 aa).

A signal peptide spans 1 to 28 (MILRPSATFAALSAHVLLRCLWMRVCEA). Residues 29–1070 (SGHFEMQVLS…KQPQNPNVDY (1042 aa)) are Extracellular-facing. An N-linked (GlcNAc...) asparagine glycan is attached at asparagine 141. Positions 186-230 (VTCDEHYFGFGCNKFCRPRDDFFGHYTCDHNGNKTCLEGWAGPEC) constitute a DSL domain. Cystine bridges form between cysteine 188–cysteine 197 and cysteine 201–cysteine 213. Asparagine 218 carries N-linked (GlcNAc...) asparagine glycosylation. Cystine bridges form between cysteine 221/cysteine 230, cysteine 235/cysteine 246, cysteine 239/cysteine 252, cysteine 254/cysteine 263, cysteine 266/cysteine 277, cysteine 272/cysteine 283, cysteine 285/cysteine 294, cysteine 301/cysteine 313, cysteine 307/cysteine 323, cysteine 325/cysteine 334, cysteine 341/cysteine 352, cysteine 346/cysteine 361, cysteine 363/cysteine 372, cysteine 379/cysteine 390, cysteine 384/cysteine 399, cysteine 401/cysteine 410, cysteine 417/cysteine 428, cysteine 422/cysteine 437, cysteine 439/cysteine 448, cysteine 455/cysteine 465, cysteine 459/cysteine 474, cysteine 476/cysteine 485, cysteine 492/cysteine 503, cysteine 497/cysteine 512, cysteine 514/cysteine 523, cysteine 530/cysteine 541, cysteine 535/cysteine 550, cysteine 552/cysteine 561, cysteine 600/cysteine 618, cysteine 620/cysteine 629, cysteine 636/cysteine 647, cysteine 641/cysteine 656, cysteine 658/cysteine 667, cysteine 674/cysteine 685, cysteine 679/cysteine 694, cysteine 696/cysteine 705, cysteine 712/cysteine 723, cysteine 717/cysteine 732, and cysteine 734/cysteine 743. The EGF-like 1 domain maps to 231-264 (NTAICKQGCSIEHGSCKVPGNCRCLYGWQGEYCD). Residues 265–295 (QCIPHPGCVHGTCIEPWQCLCDTNWGGQLCD) form the EGF-like 2; atypical domain. 2 EGF-like domains span residues 297 to 335 (DLNTCGTLQPCLNGGTCSNTGPDKYHCACPDGYSGQNCE) and 337 to 373 (ADNACLSEPCLNGGLCVESSLGFECQCAAGWTGPSCN). The EGF-like 5; calcium-binding domain maps to 375–411 (NEDDCSPNPCNHSGVCVDLVDGFKCICPVQWTGKTCL). N-linked (GlcNAc...) asparagine glycosylation occurs at asparagine 385. In terms of domain architecture, EGF-like 6; calcium-binding spans 413-449 (DANECEESPCVNAHSCRNLIGGYFCECLPGWTGQNCD). In terms of domain architecture, EGF-like 7; calcium-binding spans 451-486 (NVNDCHGQCLNGGLCKDLVNGYRCVCAAGFAGDRCE). The 37-residue stretch at 488–524 (DVDECASRPCLNGGRCQDTLNGFQCLCPPGFSGATCQ) folds into the EGF-like 8; calcium-binding domain. EGF-like domains lie at 526-562 (DLDYCESGPCQNGAQCFSLASDYYCKCPEDYEGKNCS) and 575-630 (VIDS…TYCH). Asparagine 560 carries N-linked (GlcNAc...) asparagine glycosylation. One can recognise an EGF-like 11; calcium-binding domain in the interval 632–668 (NINDCESSPCLSGGTCIDKINAYQCICADGWEGPNCE). The region spanning 670–706 (NIDDCRTNPCRDRGVCRDLVNDFYCECENGWKGKTCH) is the EGF-like 12; calcium-binding domain. EGF-like domains follow at residues 708–744 (RESQCDEDTCNNGGTCSDEGDSFKCLCSPGWEGATCN) and 747–783 (KNSSCLPNPCENGATCVVTGDGFTCVCKEGWEGPTCS). N-linked (GlcNAc...) asparagine glycosylation occurs at asparagine 748. Disulfide bonds link cysteine 751/cysteine 762, cysteine 756/cysteine 771, cysteine 773/cysteine 782, cysteine 789/cysteine 800, cysteine 794/cysteine 809, cysteine 811/cysteine 820, cysteine 827/cysteine 838, cysteine 832/cysteine 847, and cysteine 849/cysteine 858. Positions 785–821 (NSNDCNPQPCYNSGTCVDGDNWYRCECASGFAGPDCR) constitute an EGF-like 15; calcium-binding domain. The 37-residue stretch at 823 to 859 (NINECQSSPCAFGSTCVDEINGYRCLCPPGRTGPRCQ) folds into the EGF-like 16; calcium-binding domain. The EGF-like 17 domain occupies 917–959 (TGQLCVPVRDEQCFVKPCSSQGECWSAHRPAVRTHCQPDSHCA). Residues asparagine 960, asparagine 991, and asparagine 1046 are each glycosylated (N-linked (GlcNAc...) asparagine). A helical transmembrane segment spans residues 1071–1095 (MVPLLVSVVTAIWVLALASVFLWCI). Over 1096 to 1242 (RHHRKQSSSA…HSLQKMEYIV (147 aa)) the chain is Cytoplasmic. The segment at 1191-1242 (RDDRLSSNGTDIKKHPQWTNKRDNRDLESQHRVPDSQHRDSQHSLQKMEYIV) is disordered. The segment covering 1210–1232 (NKRDNRDLESQHRVPDSQHRDSQ) has biased composition (basic and acidic residues).

Its subcellular location is the membrane. The protein resides in the cell membrane. In terms of biological role, ligand for multiple Notch receptors and involved in the mediation of Notch signaling. Seems to be involved in cell-fate decisions. This is Protein jagged-1a (jag1a) from Danio rerio (Zebrafish).